A 359-amino-acid polypeptide reads, in one-letter code: Magnesium transporter NIPA2 (359 aa).

Residues 1–9 are Extracellular-facing; sequence MSLGRGKYD. The chain crosses the membrane as a helical span at residues 10 to 30; sequence FYIGLGLAMTSSIFIGGSFIL. Over 31–56 the chain is Cytoplasmic; sequence KKKGLLRLARKGSMRAGQGGHAYLKE. Residues 57-77 traverse the membrane as a helical segment; the sequence is WLWWAGLLSMGAGEVANFAAY. A topological domain (extracellular) is located at residue A78. A helical membrane pass occupies residues 79–99; the sequence is FAPATLVTPLGALSVLVSAIL. The Cytoplasmic portion of the chain corresponds to 100–107; sequence SSYFLNER. Residues 108-128 form a helical membrane-spanning segment; it reads LNLHGKIGCLLSILGSTVMVI. At 129–149 the chain is on the extracellular side; it reads HAPKEEEIETLNEMSHKLGDP. A helical membrane pass occupies residues 150-170; the sequence is GFVVFATFVVIVALIFIFVVG. At 171–175 the chain is on the cytoplasmic side; sequence PRHGQ. The helical transmembrane segment at 176–196 threads the bilayer; it reads TNILVYITICSVIGAFSVSCV. Residues 197–215 are Extracellular-facing; sequence KGLGIAIKELLAGKPVLQH. A helical transmembrane segment spans residues 216–236; that stretch reads PLAWILLFSLVVCVSTQINYL. The Cytoplasmic portion of the chain corresponds to 237–246; sequence NRALDIFNTS. Residues 247–267 form a helical membrane-spanning segment; sequence IVTPIYYVFFTTSVLTCSAIL. The Extracellular portion of the chain corresponds to 268 to 278; sequence FKEWQDMPVDD. Residues 279–299 form a helical membrane-spanning segment; that stretch reads VIGTLSGFFTIIVGIFLLHAF. The Cytoplasmic portion of the chain corresponds to 300-359; the sequence is KDVSFSLASLPVSFRKDEKAMNGNLSSMYEVLNNNEDDLPCGIEHTGENISRRNGNLPSF.

The protein belongs to the NIPA family. As to expression, widely expressed. Expressed at high levels in the kidney.

The protein localises to the cell membrane. The protein resides in the early endosome. The catalysed reaction is Mg(2+)(in) = Mg(2+)(out). In terms of biological role, acts as a selective Mg(2+) transporter. This chain is Magnesium transporter NIPA2 (Nipa2), found in Mus musculus (Mouse).